The following is a 152-amino-acid chain: 3-dehydroquinate dehydratase (152 aa).

Residue Tyr23 is the Proton acceptor of the active site. Substrate is bound by residues Asn75, His81, and Asp88. His101 functions as the Proton donor in the catalytic mechanism. Residues 102 to 103 (IS) and Arg112 each bind substrate.

It belongs to the type-II 3-dehydroquinase family. Homododecamer.

The catalysed reaction is 3-dehydroquinate = 3-dehydroshikimate + H2O. The protein operates within metabolic intermediate biosynthesis; chorismate biosynthesis; chorismate from D-erythrose 4-phosphate and phosphoenolpyruvate: step 3/7. Functionally, catalyzes a trans-dehydration via an enolate intermediate. The chain is 3-dehydroquinate dehydratase from Alkalilimnicola ehrlichii (strain ATCC BAA-1101 / DSM 17681 / MLHE-1).